Consider the following 402-residue polypeptide: LIM/homeobox protein Lhx5 (402 aa).

2 LIM zinc-binding domains span residues 3 to 61 and 62 to 125; these read VHCA…RRFG and TKCA…SSSL. Residues 124–135 are compositionally biased toward low complexity; it reads SLKEGSLNSVSS. Disordered stretches follow at residues 124 to 186 and 298 to 402; these read SLKE…PRTT and HGPP…AAVW. Positions 151–167 are enriched in basic and acidic residues; that stretch reads DDPKETDNSTSSDKETA. The homeobox DNA-binding region spans 180–239; sequence RRGPRTTIKAKQLETLKAAFAATPKPTRHIREQLAQETGLNMRVIQVWFQNRRSKERRMK. 2 stretches are compositionally biased toward low complexity: residues 300 to 311 and 322 to 336; these read PPSQAQSPADSS and PLGALEPPLAGPHAA.

Expressed in fetal brain and in various regions of the adult central nervous system including the spinal cord, the thalamus, and the cerebellum.

It is found in the nucleus. Plays an essential role in the regulation of neuronal differentiation and migration during development of the central nervous system. The polypeptide is LIM/homeobox protein Lhx5 (LHX5) (Homo sapiens (Human)).